Consider the following 926-residue polypeptide: MAAARPALTDSLSFCLAQLTAAAGEGPGGGKDPATNETPLGRALLALRTRHIKAAEGIERFRARGGLRPLLALLRRTAAAGPAPSQAASGSAPSSVASAGSTPGHAPAAESLLTPSLPMRLRKTLDLALSILANCCTEGACRAEVRRLGGILPLVTILQCVKTDSIQNRTARALGNLAMEPESCRDIHSAGAVPFLVESLTACQDSQCLQSIVRALRNLADSPQHRLALAQQGAVRPLAELLATAPDPALTAALVRALLELSRGCSRACAEQLSLGGALGPLVSLASHPKRAIREAAILILANLCAQGLVRPALGNAGGVEVLLGELRRRRSPGGSSSATQQPLVRAVCLLCREAINRARLRDAGGLELLMGLLQDPGASAWHPRVVAALVGFLYDTGALGKLQALGLVPLLARQLCGEAGEEEEEGIEAASWDFPEERTSGQAEGGSFRSLRLWLISEGYAAGPGDISPDWSPERCPMPEPSESVSPTPGQTSMSTPRTLRKPGRIPAATPEEPWGQEGPALLLLSRFSQAPDPSGALVTGPALCGLLAYVTGAPGPPNPRALRILARLTCNPACLEAFVRTYGAALLRAWLVLGVSPDDWPVPHARPVHRSQHRELGEMLLQNLTVQAESPFGVGALTHLLLSGSPEDRVACALTLPFICRKPTLWRRLLLDQGGLRLLLTALTQPAPHPLFLFFAADSLSCLQGLVSPTASPVPLPALPLELDSPPPCLYEPLLGPAPAPAPDLHFVLDSGLQLPAQRAASAAASPFFRALLSGSFAEAQMDLVPLRGLSPGAAWPVLHHLHGCRGCGAALGPVPPPGQPLLGSKAEEALEAAGRFLLPALEEELEEAVGRIHLSPRGGPESVGEVFRLGRPRLAAHCARWTLEPGQCPRKRALALTGLVEAAGEEAGPLTEALLAVVMGIES.

A compositionally biased stretch (low complexity) spans 82 to 104 (PAPSQAASGSAPSSVASAGSTPG). Residues 82-111 (PAPSQAASGSAPSSVASAGSTPGHAPAAES) form a disordered region. 7 ARM repeats span residues 139-179 (GACR…NLAM), 181-221 (PESC…NLAD), 223-263 (PQHR…ELSR), 267-306 (RACAEQLSLGGALGPLVSLASHPKRAIREAAILILANLCA), 307-354 (QGLV…LCRE), 355-399 (AINR…DTGA), and 401-440 (GKLQALGLVPLLARQLCGEAGEEEEEGIEAASWDFPEERT). The residue at position 337 (serine 337) is a Phosphoserine. A disordered region spans residues 472–516 (WSPERCPMPEPSESVSPTPGQTSMSTPRTLRKPGRIPAATPEEPW). The span at 484 to 499 (ESVSPTPGQTSMSTPR) shows a compositional bias: polar residues. Positions 745–813 (PDLHFVLDSG…LHGCRGCGAA (69 aa)) constitute a BTB domain.

As to quaternary structure, substrate-recognition component of the BCR(ARMC5) E3 ubiquitin ligase complex, at least composed of CUL3, ARMC5 and RBX1. In terms of processing, ubiquitinated by a BCR (BTB-CUL3-RBX1) E3 ubiquitin ligase complex, leading to its degradation. Deubiquitinated by USP7. As to expression, expression is high in the thymus, stomach, bone marrow and lymphatic tissues (including lymph nodes and intestinal wall). Also expressed in the adrenal gland, skin and in brain structures, with noticeable levels found in the cerebellum.

The protein resides in the nucleus. The protein localises to the chromosome. It is found in the cytoplasm. It functions in the pathway protein modification; protein ubiquitination. Its function is as follows. Substrate-recognition component of a BCR (BTB-CUL3-RBX1) E3 ubiquitin ligase complex that terminates RNA polymerase II (Pol II) transcription in the promoter-proximal region of genes. The BCR(ARMC5) complex provides a quality checkpoint during transcription elongation by driving premature transcription termination of transcripts that are unfavorably configured for transcriptional elongation: the BCR(ARMC5) complex acts by mediating ubiquitination of Pol II subunit POLR2A phosphorylated at 'Ser-5' of the C-terminal domain (CTD), leading to POLR2A degradation. The BCR(ARMC5) complex acts in parallel of the integrator complex and is specific for RNA Pol II originating from the promoter-proximal zone: it does not ubiquitinate elongation-stalled RNA Pol II. The BCR(ARMC5) complex also acts as a regulator of fatty acid desaturation by mediating ubiquitination and degradation of SCAP-free SREBF1 and SREBF2. Involved in fetal development, T-cell function and adrenal gland growth homeostasis. Plays a role in steroidogenesis, modulates steroidogenic enzymes expression and cortisol production. The sequence is that of Armadillo repeat-containing protein 5 from Mus musculus (Mouse).